A 167-amino-acid polypeptide reads, in one-letter code: NAD(P)H-quinone oxidoreductase subunit J (167 aa).

Belongs to the complex I 30 kDa subunit family. NDH-1 can be composed of about 15 different subunits; different subcomplexes with different compositions have been identified which probably have different functions.

The protein resides in the cellular thylakoid membrane. The enzyme catalyses a plastoquinone + NADH + (n+1) H(+)(in) = a plastoquinol + NAD(+) + n H(+)(out). It carries out the reaction a plastoquinone + NADPH + (n+1) H(+)(in) = a plastoquinol + NADP(+) + n H(+)(out). Functionally, NDH-1 shuttles electrons from an unknown electron donor, via FMN and iron-sulfur (Fe-S) centers, to quinones in the respiratory and/or the photosynthetic chain. The immediate electron acceptor for the enzyme in this species is believed to be plastoquinone. Couples the redox reaction to proton translocation, and thus conserves the redox energy in a proton gradient. Cyanobacterial NDH-1 also plays a role in inorganic carbon-concentration. The chain is NAD(P)H-quinone oxidoreductase subunit J from Microcystis aeruginosa (strain NIES-843 / IAM M-2473).